Here is a 384-residue protein sequence, read N- to C-terminus: Mannitol-1-phosphate 5-dehydrogenase (384 aa).

Residue 4–15 participates in NAD(+) binding; that stretch reads AVHFGAGNIGRG.

The protein belongs to the mannitol dehydrogenase family.

The enzyme catalyses D-mannitol 1-phosphate + NAD(+) = beta-D-fructose 6-phosphate + NADH + H(+). This is Mannitol-1-phosphate 5-dehydrogenase from Lacticaseibacillus paracasei (strain ATCC 334 / BCRC 17002 / CCUG 31169 / CIP 107868 / KCTC 3260 / NRRL B-441) (Lactobacillus paracasei).